A 228-amino-acid polypeptide reads, in one-letter code: 3-oxoadipate CoA-transferase subunit A (228 aa).

25-31 lines the CoA pocket; that stretch reads GGFGTAG.

This sequence belongs to the 3-oxoacid CoA-transferase subunit A family. In terms of assembly, heterodimer.

It carries out the reaction 3-oxoadipate + succinyl-CoA = 3-oxoadipyl-CoA + succinate. It functions in the pathway aromatic compound metabolism; beta-ketoadipate pathway; acetyl-CoA and succinyl-CoA from 3-oxoadipate: step 1/2. This is 3-oxoadipate CoA-transferase subunit A (pcaI) from Acinetobacter baylyi (strain ATCC 33305 / BD413 / ADP1).